The primary structure comprises 478 residues: Methionine aminopeptidase 2 (478 aa).

The tract at residues 1-122 (MAGVEQAASF…TDPPSVPICD (122 aa)) is disordered. Alanine 2 is modified (N-acetylalanine). The span at 36–46 (KKKRRKKKKGK) shows a compositional bias: basic residues. At serine 60 the chain carries Phosphoserine; alternate. Residue serine 60 is glycosylated (O-linked (GlcNAc) serine; alternate). Acidic residues predominate over residues 80–92 (ERDDDDEDGDGDA). The segment covering 97 to 109 (GKKKKKKKKKRGP) has biased composition (basic residues). Position 231 (histidine 231) interacts with substrate. 3 residues coordinate a divalent metal cation: aspartate 251, aspartate 262, and histidine 331. Histidine 339 provides a ligand contact to substrate. Positions 364 and 459 each coordinate a divalent metal cation.

Belongs to the peptidase M24A family. Methionine aminopeptidase eukaryotic type 2 subfamily. Binds EIF2S1 at low magnesium concentrations. Interacts strongly with the eIF-2 gamma-subunit EIF2S3. It depends on Co(2+) as a cofactor. Requires Zn(2+) as cofactor. Mn(2+) is required as a cofactor. Fe(2+) serves as cofactor. Contains approximately 12 O-linked N-acetylglucosamine (GlcNAc) residues. O-glycosylation is required for EIF2S1 binding.

The protein localises to the cytoplasm. It catalyses the reaction Release of N-terminal amino acids, preferentially methionine, from peptides and arylamides.. Functionally, cotranslationally removes the N-terminal methionine from nascent proteins. The N-terminal methionine is often cleaved when the second residue in the primary sequence is small and uncharged (Met-Ala-, Cys, Gly, Pro, Ser, Thr, or Val). Protects eukaryotic initiation factor EIF2S1 from translation-inhibiting phosphorylation by inhibitory kinases such as EIF2AK2/PKR and EIF2AK1/HCR. Plays a critical role in the regulation of protein synthesis. The chain is Methionine aminopeptidase 2 (Metap2) from Mus musculus (Mouse).